Reading from the N-terminus, the 219-residue chain is Probable cutinase 4 (219 aa).

The signal sequence occupies residues 1 to 17 (MILPSLLVASLSALAAA). 2 disulfides stabilise this stretch: Cys41-Cys120 and Cys67-Cys81. Asn99 carries an N-linked (GlcNAc...) asparagine glycan. Catalysis depends on Ser131, which acts as the Nucleophile. Cys182 and Cys189 are disulfide-bonded. Residue Asp186 is part of the active site. Catalysis depends on His199, which acts as the Proton donor/acceptor.

Belongs to the cutinase family.

The protein resides in the secreted. The enzyme catalyses cutin + H2O = cutin monomers.. Catalyzes the hydrolysis of complex carboxylic polyesters found in the cell wall of plants. Degrades cutin, a macromolecule that forms the structure of the plant cuticle. The sequence is that of Probable cutinase 4 from Aspergillus terreus (strain NIH 2624 / FGSC A1156).